Reading from the N-terminus, the 188-residue chain is Segregation and condensation protein B (188 aa).

Belongs to the ScpB family. In terms of assembly, homodimer. Homodimerization may be required to stabilize the binding of ScpA to the Smc head domains. Component of a cohesin-like complex composed of ScpA, ScpB and the Smc homodimer, in which ScpA and ScpB bind to the head domain of Smc. The presence of the three proteins is required for the association of the complex with DNA.

It localises to the cytoplasm. Its function is as follows. Participates in chromosomal partition during cell division. May act via the formation of a condensin-like complex containing Smc and ScpA that pull DNA away from mid-cell into both cell halves. This Streptococcus gordonii (strain Challis / ATCC 35105 / BCRC 15272 / CH1 / DL1 / V288) protein is Segregation and condensation protein B.